A 345-amino-acid chain; its full sequence is Phenylalanine--tRNA ligase alpha subunit (345 aa).

Glutamate 262 contributes to the Mg(2+) binding site.

Belongs to the class-II aminoacyl-tRNA synthetase family. Phe-tRNA synthetase alpha subunit type 1 subfamily. As to quaternary structure, tetramer of two alpha and two beta subunits. Requires Mg(2+) as cofactor.

The protein localises to the cytoplasm. The catalysed reaction is tRNA(Phe) + L-phenylalanine + ATP = L-phenylalanyl-tRNA(Phe) + AMP + diphosphate + H(+). This Ehrlichia canis (strain Jake) protein is Phenylalanine--tRNA ligase alpha subunit.